The chain runs to 613 residues: Chaperone protein dnaK (613 aa).

Belongs to the heat shock protein 70 family.

It localises to the plastid. The protein localises to the chloroplast. In terms of biological role, acts as a chaperone. This Phaeodactylum tricornutum (strain CCAP 1055/1) protein is Chaperone protein dnaK.